Here is a 184-residue protein sequence, read N- to C-terminus: Glutathione-regulated potassium-efflux system ancillary protein KefG (184 aa).

The protein belongs to the NAD(P)H dehydrogenase (quinone) family. KefG subfamily. In terms of assembly, interacts with KefB.

Its subcellular location is the cell inner membrane. It catalyses the reaction a quinone + NADH + H(+) = a quinol + NAD(+). The catalysed reaction is a quinone + NADPH + H(+) = a quinol + NADP(+). In terms of biological role, regulatory subunit of a potassium efflux system that confers protection against electrophiles. Required for full activity of KefB. This is Glutathione-regulated potassium-efflux system ancillary protein KefG from Erwinia tasmaniensis (strain DSM 17950 / CFBP 7177 / CIP 109463 / NCPPB 4357 / Et1/99).